Here is a 1514-residue protein sequence, read N- to C-terminus: ABC transporter C family member 3 (1514 aa).

10 helical membrane passes run 35–55, 83–103, 116–136, 153–173, 183–203, 325–345, 364–386, 439–459, 463–483, and 551–571; these read PLFLRWLSGFLHSVLLLVLFF, ALFCSLALSLLNLVLMSLSGF, LVSSLGFLLGMVSWGVLSICL, LWLVFYLVVSCYSLVVDFVMY, LLVFDIVAFIAAVFLGYVAVL, ILVTAFFAFIYTVASYVGPAL, YVLVITFFAAKIVECLSQRHWFF, WYMHDPWMVLLQVGLALWILY, GLASIAALVATIIVMLINFPF, and FVFWGAPTLVSVSTFGACILL. The ABC transmembrane type-1 1 domain occupies 325–606; it reads ILVTAFFAFI…LPDTISMIVQ (282 aa). The 224-residue stretch at 640-863 folds into the ABC transporter 1 domain; the sequence is VEVINSTLSW…GTDFMELIGA (224 aa). An ATP-binding site is contributed by 675–682; the sequence is GTVGSGKS. A run of 5 helical transmembrane segments spans residues 940-960, 987-1007, 1077-1097, 1181-1201, and 1205-1225; these read YITLAYGGALVPFILLGQVLF, LSTLMIVYVALAFGSSLCILL, IGIIGVMSQVSWLVFLVFIPV, LSSLTFVFSLVFLVSIPTGVI, and LAGLAVTYGLSLNTLQAWLIW. The ABC transmembrane type-1 2 domain maps to 950–1232; it reads VPFILLGQVL…LIWTLCNLEN (283 aa). Positions 1271-1503 constitute an ABC transporter 2 domain; that stretch reads IRDLQVRYAP…KSSSFSKLVA (233 aa). ATP is bound at residue 1303-1310; it reads GRTGSGKS.

It belongs to the ABC transporter superfamily. ABCC family. Conjugate transporter (TC 3.A.1.208) subfamily. In terms of tissue distribution, ubiquitous.

It localises to the membrane. It carries out the reaction ATP + H2O + xenobioticSide 1 = ADP + phosphate + xenobioticSide 2.. Glutathione-conjugate transport is inhibited by decyl-glutathione and, to a lower extent, by GS-GS, but not by GSH. All transports are inhibited by vanadate. Pump for glutathione S-conjugates. Mediates the transport of glutathione conjugates such as chlorodinitrobenzene-GS (DNB-GS), and of chlorophyll catabolites such as Bn-NCC-1. Also transports heavy metals such as cadmium (Cd). This is ABC transporter C family member 3 (ABCC3) from Arabidopsis thaliana (Mouse-ear cress).